A 344-amino-acid polypeptide reads, in one-letter code: MIQKLSNLLVTALAVATGVVGHGHINDIVINGVWYQAYDPTTFPYESNPPIVVGWTAADLDNGFVSPDAYQNPDIICHKNATNAKGHASVKAGDTILFQWVPVPWPHPGPIVDYLANCNGDCETVDKTTLEFFKIDGVGLLSGGDPGTWASDVLISNNNTWVVKIPDNLAPGNYVLRHEIIALHSAGQANGAQNYPQCFNIAVSGSGSLQPSGVLGTDLYHATDPGVLINIYTSPLNYIIPGPTVVSGLPTSVAQGSSAATATASATVPGGGSGPTSRTTTTARTTQASSRPSSTPPATTSAPAGGPTQTLYGQCGGSGYSGPTRCAPPATCSTLNPYYAQCLN.

A signal peptide spans M1–G21. A Cu(2+)-binding site is contributed by H22. Intrachain disulfides connect C77/C198 and C118/C122. A glycan (N-linked (GlcNAc...) asparagine) is linked at N80. Cu(2+) is bound at residue H107. An N-linked (GlcNAc...) asparagine glycan is attached at N158. O2 contacts are provided by H184 and Q193. Y195 contacts Cu(2+). The segment at A262–T310 is disordered. Residues P275–T310 are compositionally biased toward low complexity. In terms of domain architecture, CBM1 spans P307–L343.

The protein belongs to the polysaccharide monooxygenase AA9 family. The cofactor is Cu(2+).

It localises to the secreted. The catalysed reaction is [(1-&gt;4)-beta-D-glucosyl]n+m + reduced acceptor + O2 = 4-dehydro-beta-D-glucosyl-[(1-&gt;4)-beta-D-glucosyl]n-1 + [(1-&gt;4)-beta-D-glucosyl]m + acceptor + H2O.. Lytic polysaccharide monooxygenase (LPMO) that depolymerizes crystalline and amorphous polysaccharides via the oxidation of scissile alpha- or beta-(1-4)-glycosidic bonds, yielding C1 or C4 oxidation products. Catalysis by LPMOs requires the reduction of the active-site copper from Cu(II) to Cu(I) by a reducing agent and H(2)O(2) or O(2) as a cosubstrate. Shows activity on beta-glucan and amorphous cellulose. Does not show beta-1-3-glucanase, beta-1,6-glucanase, mannanase, xylanase, beta-1,3-galactosidase, amylase, pectinase, nor chitinase activities. The sequence is that of AA9 family lytic polysaccharide monooxygenase cel61A from Hypocrea jecorina (Trichoderma reesei).